The chain runs to 306 residues: Recombination-associated protein RdgC (306 aa).

This sequence belongs to the RdgC family.

Its subcellular location is the cytoplasm. The protein localises to the nucleoid. Functionally, may be involved in recombination. The chain is Recombination-associated protein RdgC from Pseudomonas entomophila (strain L48).